Here is a 148-residue protein sequence, read N- to C-terminus: Probable DNA-directed RNA polymerases I, II, and III subunit RPABC3 (148 aa).

The tract at residues 16-40 is non-specific ssDNA binding; it reads DPDGKKFDRVSRYFCDAESFKMELI.

Belongs to the eukaryotic RPB8 RNA polymerase subunit family. In terms of assembly, component of the RNA polymerase I (Pol I), RNA polymerase II (Pol II) and RNA polymerase III (Pol III) complexes consisting of at least 13, 12 and 17 subunits, respectively. Directly interacts with POLR2A.

The protein resides in the nucleus. DNA-dependent RNA polymerase catalyzes the transcription of DNA into RNA using the four ribonucleoside triphosphates as substrates. Common component of RNA polymerases I, II and III which synthesize ribosomal RNA precursors, mRNA precursors and many functional non-coding RNAs, and small RNAs, such as 5S rRNA and tRNAs, respectively. This is Probable DNA-directed RNA polymerases I, II, and III subunit RPABC3 from Caenorhabditis briggsae.